We begin with the raw amino-acid sequence, 174 residues long: Small ribosomal subunit protein uS5c (174 aa).

The S5 DRBM domain occupies 17–80; it reads WEERVVQVKR…TDAKKHLVTV (64 aa).

Belongs to the universal ribosomal protein uS5 family. In terms of assembly, part of the 30S ribosomal subunit. Contacts protein S4.

Its subcellular location is the plastid. The protein resides in the chloroplast. Functionally, with S4 and S12 plays an important role in translational accuracy. The polypeptide is Small ribosomal subunit protein uS5c (rps5) (Pyropia yezoensis (Susabi-nori)).